We begin with the raw amino-acid sequence, 270 residues long: Glutamate racemase (270 aa).

Substrate-binding positions include 14–15 (DS) and 46–47 (YG). Residue Cys77 is the Proton donor/acceptor of the active site. 78–79 (NT) contributes to the substrate binding site. The active-site Proton donor/acceptor is the Cys189. 190-191 (TH) provides a ligand contact to substrate.

The protein belongs to the aspartate/glutamate racemases family.

It carries out the reaction L-glutamate = D-glutamate. It functions in the pathway cell wall biogenesis; peptidoglycan biosynthesis. Provides the (R)-glutamate required for cell wall biosynthesis. In Neisseria meningitidis serogroup C, this protein is Glutamate racemase.